A 600-amino-acid chain; its full sequence is DDB1- and CUL4-associated factor 8-like protein 1 (600 aa).

A disordered region spans residues 1–122; the sequence is MSHQEGSTGG…EEEQPRMCPR (122 aa). 2 stretches are compositionally biased toward acidic residues: residues 74–83 and 96–115; these read SSSEDVELES and EETE…EEEE. WD repeat units follow at residues 194-233, 237-278, 284-324, 332-372, 388-427, 435-475, and 479-518; these read SHAG…PVLN, GHDI…YCEN, KHRG…PASK, DKKV…KKEN, DFPT…GAQY, RNND…IIQF, and DRGD…ATEL. The interval 562–600 is disordered; it reads PGWRDHGAEFPDEEELDESSSTSDTSEEEGQDRVQCIPS.

It belongs to the WD repeat DCAF8 family.

This chain is DDB1- and CUL4-associated factor 8-like protein 1 (DCAF8L1), found in Homo sapiens (Human).